Consider the following 335-residue polypeptide: MAISTFSIGDLGYLRNFLQNECNWFRICKKTFYREYRSVATSSPIFSLKNKPKKYCMHCEMVVLKRSHEFMFSLAVNGIHFGQFLTGIMKFKKKQVAEGLCYYVLELGSISPVDLSFIPKYNSDCVTSMHCVTPELIYENCSIVCPEEASRLTVKGLGDNKLIPLGGCGVWCLKNGGDLYIYAFVLAYDLYVACYDKTIFPSLAKIVFDMIACDSEDCVFCKDHNKHVSQAGHIVGCVSNQETCFCYTPCQKKMTDINNPELISLLCDQEINKIDIMYPEKKASLSLDINSYVHGYLGDEPCALKCVNWMPIRISSALSRLIILSCPVCKRVVMD.

The protein belongs to the herpesviridae cytoplasmic envelopment protein 2 family. As to quaternary structure, interacts with cytoplasmic envelopment protein 3 and with the capsid.

The protein resides in the virion tegument. It localises to the host cytoplasm. Its subcellular location is the host nucleus. Functionally, plays a critical role in cytoplasmic virus egress. Participates in the final step of tegumentation and envelope acquisition within the host cytoplasm by directly interacting with the capsid. Upon virion binding to target cell, a signaling cascade is triggered to disrupt the interaction with the capsid, thereby preparing capsid uncoating. This Human herpesvirus 6B (strain Z29) (HHV-6 variant B) protein is Cytoplasmic envelopment protein 2 (U65).